The chain runs to 83 residues: Cytochrome b559 subunit alpha (83 aa).

A helical transmembrane segment spans residues 21–35 (VIHSITIPSLFIAGW). H23 lines the heme pocket.

This sequence belongs to the PsbE/PsbF family. Heterodimer of an alpha subunit and a beta subunit. PSII is composed of 1 copy each of membrane proteins PsbA, PsbB, PsbC, PsbD, PsbE, PsbF, PsbH, PsbI, PsbJ, PsbK, PsbL, PsbM, PsbT, PsbX, PsbY, PsbZ, Psb30/Ycf12, at least 3 peripheral proteins of the oxygen-evolving complex and a large number of cofactors. It forms dimeric complexes. Heme b serves as cofactor.

The protein resides in the plastid. It is found in the chloroplast thylakoid membrane. In terms of biological role, this b-type cytochrome is tightly associated with the reaction center of photosystem II (PSII). PSII is a light-driven water:plastoquinone oxidoreductase that uses light energy to abstract electrons from H(2)O, generating O(2) and a proton gradient subsequently used for ATP formation. It consists of a core antenna complex that captures photons, and an electron transfer chain that converts photonic excitation into a charge separation. In Psilotum nudum (Whisk fern), this protein is Cytochrome b559 subunit alpha.